The sequence spans 159 residues: Cytochrome c-type biogenesis protein CcmE (159 aa).

Topologically, residues 1–23 are cytoplasmic; it reads MSSQSFHNSPSLRVILKQRKKKR. A helical; Signal-anchor for type II membrane protein transmembrane segment spans residues 24–44; the sequence is LLIVLFCCLIIAIATSLITYA. The Periplasmic portion of the chain corresponds to 45-159; it reads LRNTVSFFRM…RLNKHHRVEK (115 aa). 2 residues coordinate heme: His-138 and Tyr-142.

The protein belongs to the CcmE/CycJ family.

It is found in the cell inner membrane. Functionally, heme chaperone required for the biogenesis of c-type cytochromes. Transiently binds heme delivered by CcmC and transfers the heme to apo-cytochromes in a process facilitated by CcmF and CcmH. This is Cytochrome c-type biogenesis protein CcmE from Bartonella henselae (strain ATCC 49882 / DSM 28221 / CCUG 30454 / Houston 1) (Rochalimaea henselae).